A 94-amino-acid chain; its full sequence is Selenoprotein K (94 aa).

A helical membrane pass occupies residues 20 to 42; it reads VSFLTDFFWGIAEFVVFFFKTLL. The interval 46-94 is disordered; the sequence is VKKRRGYGSSSDSRYDDGRGPPGNPPRRMGRISHLRGPSPPPMAGGUGR. Selenocysteine 92 is a non-standard amino acid (selenocysteine).

The protein belongs to the selenoprotein K family. In terms of assembly, interacts with DERL1, DERL2, DERL3 and SELENOS. The SELENOK-SELENOS complex interacts with VCP. Interacts with ZDHHC6. In terms of processing, cleaved by CAPN2/m-calpain in resting macrophages but not in activated macrophages. Macrophage activation up-regulates expression of the calpain inhibitor CAST/calpastatin, resulting in inhibition of CAPN2 activity. Truncated SELENOK proteins produced by failed UGA/Sec decoding are ubiquitinated by the CRL2(KLHDC2) complex, which recognizes the diglycine (Gly-Gly) at the C-terminus of truncated SELENOK proteins. High expression in spleen and intestine (at protein level). Expressed in a range of immune cells including T and B-cells and also in myeloid cells including macrophages, neutrophils and dendritic cells (at protein level).

The protein localises to the endoplasmic reticulum membrane. It localises to the cell membrane. Its function is as follows. Required for Ca(2+) flux in immune cells and plays a role in T-cell proliferation and in T-cell and neutrophil migration. Involved in endoplasmic reticulum-associated degradation (ERAD) of soluble glycosylated proteins. Required for palmitoylation and cell surface expression of CD36 and involved in macrophage uptake of low-density lipoprotein and in foam cell formation. Together with ZDHHC6, required for palmitoylation of ITPR1 in immune cells, leading to regulate ITPR1 stability and function. Plays a role in protection of cells from ER stress-induced apoptosis. Protects cells from oxidative stress when overexpressed in cardiomyocytes. The protein is Selenoprotein K of Mus musculus (Mouse).